Reading from the N-terminus, the 638-residue chain is Ubiquitin-like-specific protease 2 (638 aa).

Residues 1-12 show a composition bias toward basic and acidic residues; the sequence is MRDSKDALDDKS. 2 disordered regions span residues 1 to 79 and 238 to 314; these read MRDS…PKHL and PQKT…TSND. A compositionally biased stretch (polar residues) spans 238-249; that stretch reads PQKTVRSIVKQT. A compositionally biased stretch (low complexity) spans 250–264; the sequence is SSPHSSKMPKHSLPS. The segment covering 267–314 has biased composition (polar residues); sequence TPFNSNSGDSLLSRIKNSNQSSSERPTANNGAQEQNQSSSSAGNTSND. Residues histidine 440 and aspartate 494 contribute to the active site. The residue at position 526 (threonine 526) is a Phosphothreonine. Cysteine 544 is a catalytic residue. Residues 610 to 619 are compositionally biased toward polar residues; the sequence is NERQSLSSGS. The segment at 610–638 is disordered; the sequence is NERQSLSSGSNDEEDKENDDDLAILPITN. Positions 620 to 631 are enriched in acidic residues; sequence NDEEDKENDDDL.

It belongs to the peptidase C48 family.

The protein resides in the nucleus. This Schizosaccharomyces pombe (strain 972 / ATCC 24843) (Fission yeast) protein is Ubiquitin-like-specific protease 2 (ulp2).